A 425-amino-acid polypeptide reads, in one-letter code: MSKIHDARRVVITGIGVVAPGDVGTKPFWEMLTAGRTATRPISSFDASPFRSQVAAECDFDPAAEGLSQRQVRAWDRTMQFAYVAAREALADSGVTGEADPLRTGVMAGTACGMTMSLDREYAVVSDEGRLWQVDDAHGVPYLYDYFVPSSMAAEIAWLAEAEGPAGVVSAGCTSGIDVLTHAADLVRDGAAEVMVAGASDAAISPITVACFDAIKATTPRNDEPETASRPFDRTRNGFVLGEGAAFFVLEEYAHARRRGARAYAEIAGYAGRCNAYSMTGLRSDGRELAEAVSRALDIARVDPSEVDYVNAHGSATKQNDLHETAAFKRSLGPHAYSVPISSIKSMIGHSLGAICALEVAASALRIEHGVIPPTANLREPDPDCDLDYVPLVAREAEVSTVVSVASGFGGFQSAIVLTEPGRQR.

A Ketosynthase family 3 (KS3) domain is found at 7–420 (ARRVVITGIG…GFQSAIVLTE (414 aa)). Residues C173, H313, and H350 each act as for beta-ketoacyl synthase activity in the active site.

This sequence belongs to the thiolase-like superfamily. Beta-ketoacyl-ACP synthases family.

Its pathway is antibiotic biosynthesis; oxytetracycline biosynthesis. The protein is Oxytetracycline polyketide putative beta-ketoacyl synthase 1 of Streptomyces rimosus.